Here is a 223-residue protein sequence, read N- to C-terminus: UPF0502 protein Sde_2426 (223 aa).

The protein belongs to the UPF0502 family.

The chain is UPF0502 protein Sde_2426 from Saccharophagus degradans (strain 2-40 / ATCC 43961 / DSM 17024).